The following is a 167-amino-acid chain: Menaquinol:cytochrome c reductase iron-sulfur subunit (167 aa).

One can recognise a Rieske domain in the interval 59–158 (TKEPQRFDFK…QEVKDGFLYL (100 aa)). Positions 100, 102, 121, and 124 each coordinate [2Fe-2S] cluster. Cys105 and Cys123 are joined by a disulfide.

This sequence belongs to the Rieske iron-sulfur protein family. In terms of assembly, the main subunits of the menaquinol:cytochrome c complex are a Rieske-type iron-sulfur protein (QcrA), a cytochrome b (QcrB) and a cytochrome c (QcrC). [2Fe-2S] cluster is required as a cofactor.

Its function is as follows. Component of the menaquinol:cytochrome c reductase complex. The Rieske protein is a high potential 2Fe-2S protein. The sequence is that of Menaquinol:cytochrome c reductase iron-sulfur subunit (qcrA) from Bacillus subtilis (strain 168).